A 37-amino-acid chain; its full sequence is Calcitonin gene-related peptide 1 (37 aa).

Residues Cys2 and Cys7 are joined by a disulfide bond. Phe37 is subject to Phenylalanine amide.

It belongs to the calcitonin family.

The protein localises to the secreted. In terms of biological role, CGRP1/CALCA is a peptide hormone that induces vasodilation mediated by the CALCRL-RAMP1 receptor complex. Dilates a variety of vessels including the coronary, cerebral and systemic vasculature. Its abundance in the CNS also points toward a neurotransmitter or neuromodulator role. It also elevates platelet cAMP. CGRP1 can also bind and activate CALCR-RAMP1 (AMYR1) receptor complex. The sequence is that of Calcitonin gene-related peptide 1 (CALCA) from Sus scrofa (Pig).